We begin with the raw amino-acid sequence, 1509 residues long: DNA polymerase alpha catalytic subunit (1509 aa).

The tract at residues 1–162 (MNRPKREKKS…KKTKEKKNEI (162 aa)) is disordered. Composition is skewed to basic and acidic residues over residues 21-35 (EQIKRARDGEKRTDQ) and 42-79 (ERKRLEQLKEQETEFDKEERKRKNRDFIEGDSGYRETS). Positions 27–67 (RDGEKRTDQLQEEDDERKRLEQLKEQETEFDKEERKRKNRD) form a coiled coil. The segment covering 80–123 (DNEDEDEDEDDDGDNSDDDYSLDEDDEDGGGDGENNDSDQEEAI) has biased composition (acidic residues). Residues 127–137 (RKKKRQVKKKS) show a composition bias toward basic residues. The segment covering 138 to 147 (KKDENGEPKV) has biased composition (basic and acidic residues). Residues 148 to 157 (KTPRVKKTKE) show a composition bias toward basic residues. Coiled-coil stretches lie at residues 234 to 263 (APDSELDLEKLKEKQLELEKKLEKEALLNK) and 958 to 989 (LHGLVSKRREIKKRMEQEKNKIIKAQYDIQQQ). Positions 1328, 1331, 1355, 1358, 1389, 1392, 1406, and 1411 each coordinate Zn(2+). The segment at 1328 to 1358 (CPYCGQNNEFTGIVKIDSEGKSESGFDCNQC) adopts a CysA-type zinc-finger fold. A CysB motif motif is present at residues 1389-1411 (CTECEKVSKNYKETSYRCARPQC).

The protein belongs to the DNA polymerase type-B family.

Its subcellular location is the nucleus. The catalysed reaction is DNA(n) + a 2'-deoxyribonucleoside 5'-triphosphate = DNA(n+1) + diphosphate. Its function is as follows. Polymerase alpha in a complex with DNA primase is a replicative polymerase. This Dictyostelium discoideum (Social amoeba) protein is DNA polymerase alpha catalytic subunit (pola1).